Consider the following 234-residue polypeptide: Orotidine 5'-phosphate decarboxylase (234 aa).

Substrate contacts are provided by residues Asp-11, Lys-33, 60 to 69, Thr-120, Arg-181, Gln-190, Gly-210, and Arg-211; that span reads DLKFHDIPNT. Catalysis depends on Lys-62, which acts as the Proton donor.

This sequence belongs to the OMP decarboxylase family. Type 1 subfamily. Homodimer.

It carries out the reaction orotidine 5'-phosphate + H(+) = UMP + CO2. Its pathway is pyrimidine metabolism; UMP biosynthesis via de novo pathway; UMP from orotate: step 2/2. Functionally, catalyzes the decarboxylation of orotidine 5'-monophosphate (OMP) to uridine 5'-monophosphate (UMP). This is Orotidine 5'-phosphate decarboxylase from Aliivibrio fischeri (strain ATCC 700601 / ES114) (Vibrio fischeri).